Here is a 243-residue protein sequence, read N- to C-terminus: Triosephosphate isomerase (243 aa).

9–11 contributes to the substrate binding site; it reads NWK. Residue histidine 96 is the Electrophile of the active site. Glutamate 165 (proton acceptor) is an active-site residue. Substrate is bound by residues glycine 171, serine 204, and 225–226; that span reads GG.

The protein belongs to the triosephosphate isomerase family. In terms of assembly, homodimer.

The protein localises to the cytoplasm. It catalyses the reaction D-glyceraldehyde 3-phosphate = dihydroxyacetone phosphate. It participates in carbohydrate biosynthesis; gluconeogenesis. It functions in the pathway carbohydrate degradation; glycolysis; D-glyceraldehyde 3-phosphate from glycerone phosphate: step 1/1. Its function is as follows. Involved in the gluconeogenesis. Catalyzes stereospecifically the conversion of dihydroxyacetone phosphate (DHAP) to D-glyceraldehyde-3-phosphate (G3P). The chain is Triosephosphate isomerase from Parasynechococcus marenigrum (strain WH8102).